A 260-amino-acid chain; its full sequence is MVKESAEILSEIRKNYILSTMKGGKRIDGRLPDEFRELTIIENYIPRANGSAYVALGNTRVVAGVKIEAGEPFPDTPDQGVLTTNVELLPIAFPSFEAGPPNDLAIEVSRVVDRGIRESKMISPEKLVIEQGKKVWIVFLDINVLDYDGNLIDASTIAAVAALRNAVVPASKEGGEDFKLPVSSTPISVTMVKIGDTLVCDPSLEEDQICGGRITVTTTEDGHIRAMQKGEIGAFTVEDVKKAVKMSLEVGKKLREKYFR.

Belongs to the RNase PH family. Rrp42 subfamily. As to quaternary structure, component of the archaeal exosome complex. Forms a hexameric ring-like arrangement composed of 3 Rrp41-Rrp42 heterodimers. The hexameric ring associates with a trimer of Rrp4 and/or Csl4 subunits.

Its subcellular location is the cytoplasm. In terms of biological role, non-catalytic component of the exosome, which is a complex involved in RNA degradation. Contributes to the structuring of the Rrp41 active site. In Thermoplasma acidophilum (strain ATCC 25905 / DSM 1728 / JCM 9062 / NBRC 15155 / AMRC-C165), this protein is Exosome complex component Rrp42.